The chain runs to 555 residues: Glucose-6-phosphate isomerase (555 aa).

Catalysis depends on Glu365, which acts as the Proton donor. Residues His396 and Lys522 contribute to the active site.

It belongs to the GPI family.

The protein resides in the cytoplasm. The enzyme catalyses alpha-D-glucose 6-phosphate = beta-D-fructose 6-phosphate. The protein operates within carbohydrate biosynthesis; gluconeogenesis. It participates in carbohydrate degradation; glycolysis; D-glyceraldehyde 3-phosphate and glycerone phosphate from D-glucose: step 2/4. Functionally, catalyzes the reversible isomerization of glucose-6-phosphate to fructose-6-phosphate. This Psychrobacter cryohalolentis (strain ATCC BAA-1226 / DSM 17306 / VKM B-2378 / K5) protein is Glucose-6-phosphate isomerase.